The chain runs to 295 residues: MSKISPINIKELLDAGVHFGHKTSRWNPKMASYIYGERDDVHIIDLRQSAALMSVALNAIYETVKKDGKILFVSTKIQASDIIAEYAEKCGQYYVNNRWLGGMLTNWKTIACSIEKLEKLEKTLESEETRVCYTKKEILDMSRKKDKLLLSLAGIRNLNSKPDLLVVIDTNKEHIAINEAVKLNIPIVAVVDTNSNPDNINYPIPGNDDSIRSIRLYCSLFADAALQGLEESMKVSGVDIGTMQEHTDKALTSKTISKLKQTKKFSKTQNIDEETNTEFDQALSDACENKNSDNT.

This sequence belongs to the universal ribosomal protein uS2 family.

This Rickettsia typhi (strain ATCC VR-144 / Wilmington) protein is Small ribosomal subunit protein uS2.